Consider the following 343-residue polypeptide: Probable F-box protein At1g67455 (343 aa).

One can recognise an F-box domain in the interval 1–46 (MMISDLPEDMVEEILSRVSIISLGALRWNDLSKARVICKAEARQQF).

The polypeptide is Probable F-box protein At1g67455 (Arabidopsis thaliana (Mouse-ear cress)).